Here is a 644-residue protein sequence, read N- to C-terminus: DNA mismatch repair protein MutL (644 aa).

A disordered region spans residues 363–405 (GTFNPFTDDKTNQHYTKAGSGSGSGYSSGSSSSSGSGSGSSYS). Over residues 389–405 (SSGSSSSSGSGSGSSYS) the composition is skewed to low complexity.

This sequence belongs to the DNA mismatch repair MutL/HexB family.

Functionally, this protein is involved in the repair of mismatches in DNA. It is required for dam-dependent methyl-directed DNA mismatch repair. May act as a 'molecular matchmaker', a protein that promotes the formation of a stable complex between two or more DNA-binding proteins in an ATP-dependent manner without itself being part of a final effector complex. The protein is DNA mismatch repair protein MutL of Flavobacterium johnsoniae (strain ATCC 17061 / DSM 2064 / JCM 8514 / BCRC 14874 / CCUG 350202 / NBRC 14942 / NCIMB 11054 / UW101) (Cytophaga johnsonae).